The primary structure comprises 594 residues: MNFNVWNIKEMLSIPSGSGNKKSSNWNNNQNDYSSLSDSQFLFGSQFCPENSETLSAPLDFGAHLRHSKQSQQNYLEGEPSIFTKYQTKPQLFGGDIKDGGLFPPPLSVGKSKGLLEQFEEKKKRAKDKCDSETLYNFVSNVRESILRLQTSVEKSEDHLSSRSQSILDSLETVAKTLQETIQAQNDLVFEAVQDKGNMEQAILEMKKRFEARQGEFIEMKSNLKHLEVLVAQQSQEFQQLCEQLGQLNVPSVLAELKRLISVPPVKDSASQTSPPLAQSLNLTRQEKYTSEKPVLWQAQALPAAWNPGMGSLQPGEFDVWGEGAKNDDLQEEAALPAFGSHERNRHVKDKVVQTNCKNWAVTKTGAKNHGSSVPGHKIPSDRDLVSQGASQLTSLEINFSTSIKNACQKYQAQSMFLCDPREHLVIKQKDGTVEMRGKDKKQQPRKAHRAHRGRLIASKQKQIPIQTCKFNSKYQSPQPAISVPQSPFLGQQEPRAQPLHLQCPRSPRKPVCPILGGTVMPNKTVRAVQGRLLQLSRCSSQDNWLLSSSSQGDHQMSWFSDLNLGCSETPLCKEAGKNLLYDLGFDSSDDDGF.

Coiled coils occupy residues 109-135 (VGKS…SETL), 165-189 (QSIL…NDLV), and 219-245 (EMKS…CEQL). Residues 434-443 (VEMRGKDKKQ) show a composition bias toward basic and acidic residues. The interval 434 to 454 (VEMRGKDKKQQPRKAHRAHRG) is disordered. Basic residues predominate over residues 444-454 (QPRKAHRAHRG). Residues Ser588 and Ser589 each carry the phosphoserine modification.

Part of the MCD recombinosome complex, at least composed of IHO1, REC114 and MEI4. Interacts with REC114. Interacts with MEI4. Interacts with HORMAD1. Interacts with ANKRD31.

It localises to the chromosome. Functionally, required for DNA double-strand breaks (DSBs) formation in unsynapsed regions during meiotic recombination. Probably acts by forming a complex with MEI4 and REC114, which activates DSBs formation in unsynapsed regions, an essential step to ensure completion of synapsis. Not required for HORMAD1 functions in pairing-independent synaptonemal complex formation, ATR recruitment to unsynapsed axes, meiotic silencing of unsynapsed chromatin (MSUC) or meiotic surveillance. In Homo sapiens (Human), this protein is Interactor of HORMAD1 protein 1.